An 834-amino-acid polypeptide reads, in one-letter code: Protein translocase subunit SecA (834 aa).

ATP is bound by residues Gln-85, 103-107 (GEGKT), and Asp-491. Zn(2+) is bound by residues Cys-818, Cys-820, Cys-829, and Cys-830.

The protein belongs to the SecA family. In terms of assembly, monomer and homodimer. Part of the essential Sec protein translocation apparatus which comprises SecA, SecYEG and auxiliary proteins SecDF. Other proteins may also be involved. The cofactor is Zn(2+).

The protein localises to the cell membrane. It is found in the cytoplasm. It catalyses the reaction ATP + H2O + cellular proteinSide 1 = ADP + phosphate + cellular proteinSide 2.. In terms of biological role, part of the Sec protein translocase complex. Interacts with the SecYEG preprotein conducting channel. Has a central role in coupling the hydrolysis of ATP to the transfer of proteins into and across the cell membrane, serving as an ATP-driven molecular motor driving the stepwise translocation of polypeptide chains across the membrane. This Clostridium kluyveri (strain ATCC 8527 / DSM 555 / NBRC 12016 / NCIMB 10680 / K1) protein is Protein translocase subunit SecA.